The following is an 82-amino-acid chain: uncharacterized protein (82 aa).

This is an uncharacterized protein from Autographa californica nuclear polyhedrosis virus (AcMNPV).